Here is a 222-residue protein sequence, read N- to C-terminus: Large ribosomal subunit protein uL1 (222 aa).

It belongs to the universal ribosomal protein uL1 family. Part of the 50S ribosomal subunit.

Functionally, binds directly to 23S rRNA. Probably involved in E site tRNA release. In terms of biological role, protein L1 is also a translational repressor protein, it controls the translation of its operon by binding to its mRNA. The protein is Large ribosomal subunit protein uL1 of Pyrobaculum calidifontis (strain DSM 21063 / JCM 11548 / VA1).